The chain runs to 147 residues: uncharacterized protein (147 aa).

The 137-residue stretch at 1–137 (MRDNTIGSLI…LYELMTKVHK (137 aa)) folds into the HTH marR-type domain. The segment at residues 53 to 76 (QMELAEKVTVTQGGISRMLTRLEK) is a DNA-binding region (H-T-H motif).

This is an uncharacterized protein from Bacillus cereus (strain ATCC 14579 / DSM 31 / CCUG 7414 / JCM 2152 / NBRC 15305 / NCIMB 9373 / NCTC 2599 / NRRL B-3711).